The sequence spans 720 residues: Catalase-peroxidase (720 aa).

A cross-link (tryptophyl-tyrosyl-methioninium (Trp-Tyr) (with M-233)) is located at residues 82–207 (WHSAGTYRTF…LGNTVMGLIY (126 aa)). The active-site Proton acceptor is His-83. Positions 207 to 233 (YVNPEGPNGEPDLEGSAKNIRESFGKM) form a cross-link, tryptophyl-tyrosyl-methioninium (Tyr-Met) (with W-82). His-248 contributes to the heme b binding site.

Belongs to the peroxidase family. Peroxidase/catalase subfamily. In terms of assembly, homodimer or homotetramer. Heme b serves as cofactor. Post-translationally, formation of the three residue Trp-Tyr-Met cross-link is important for the catalase, but not the peroxidase activity of the enzyme.

It catalyses the reaction H2O2 + AH2 = A + 2 H2O. The enzyme catalyses 2 H2O2 = O2 + 2 H2O. In terms of biological role, bifunctional enzyme with both catalase and broad-spectrum peroxidase activity. This Halobacterium salinarum (strain ATCC 29341 / DSM 671 / R1) protein is Catalase-peroxidase.